The following is a 735-amino-acid chain: 5-methyltetrahydropteroyltriglutamate--homocysteine methyltransferase (735 aa).

Residues 15-18 (REFK) and Lys-104 contribute to the 5-methyltetrahydropteroyltri-L-glutamate site. Residues 409 to 411 (IGS) and Glu-462 each bind L-homocysteine. L-methionine contacts are provided by residues 409 to 411 (IGS) and Glu-462. Residues 493 to 494 (RC) and Trp-539 each bind 5-methyltetrahydropteroyltri-L-glutamate. Asp-577 is an L-homocysteine binding site. Asp-577 is an L-methionine binding site. Glu-583 contacts 5-methyltetrahydropteroyltri-L-glutamate. Residues His-618, Cys-620, and Glu-642 each contribute to the Zn(2+) site. His-672 acts as the Proton donor in catalysis. Position 704 (Cys-704) interacts with Zn(2+).

It belongs to the vitamin-B12 independent methionine synthase family. Requires Zn(2+) as cofactor.

The enzyme catalyses 5-methyltetrahydropteroyltri-L-glutamate + L-homocysteine = tetrahydropteroyltri-L-glutamate + L-methionine. It functions in the pathway amino-acid biosynthesis; L-methionine biosynthesis via de novo pathway; L-methionine from L-homocysteine (MetE route): step 1/1. Catalyzes the transfer of a methyl group from 5-methyltetrahydrofolate to homocysteine resulting in methionine formation. This chain is 5-methyltetrahydropteroyltriglutamate--homocysteine methyltransferase, found in Thermotoga petrophila (strain ATCC BAA-488 / DSM 13995 / JCM 10881 / RKU-1).